The sequence spans 318 residues: HPr kinase/phosphorylase (318 aa).

Active-site residues include histidine 146 and lysine 167. 161-168 (GESGLGKS) lines the ATP pocket. A Mg(2+)-binding site is contributed by serine 168. Residue aspartate 185 is the Proton acceptor; for phosphorylation activity. Proton donor; for dephosphorylation activity of the active site. The interval 209-218 (LEVRGIGLLD) is important for the catalytic mechanism of both phosphorylation and dephosphorylation. Glutamate 210 serves as a coordination point for Mg(2+). Arginine 252 is an active-site residue. Residues 273–278 (QVVAGR) form an important for the catalytic mechanism of dephosphorylation region.

It belongs to the HPrK/P family. In terms of assembly, homohexamer. It depends on Mg(2+) as a cofactor.

The catalysed reaction is [HPr protein]-L-serine + ATP = [HPr protein]-O-phospho-L-serine + ADP + H(+). The enzyme catalyses [HPr protein]-O-phospho-L-serine + phosphate + H(+) = [HPr protein]-L-serine + diphosphate. Catalyzes the ATP- as well as the pyrophosphate-dependent phosphorylation of a specific serine residue in HPr, a phosphocarrier protein of the phosphoenolpyruvate-dependent sugar phosphotransferase system (PTS). HprK/P also catalyzes the pyrophosphate-producing, inorganic phosphate-dependent dephosphorylation (phosphorolysis) of seryl-phosphorylated HPr (P-Ser-HPr). This Verminephrobacter eiseniae (strain EF01-2) protein is HPr kinase/phosphorylase.